We begin with the raw amino-acid sequence, 791 residues long: Diacylglycerol kinase gamma (791 aa).

2 disordered regions span residues 82 to 103 (KPRH…ANSA) and 117 to 154 (DEAC…SSSS). The span at 83–92 (PRHETSDHPT) shows a compositional bias: basic and acidic residues. Over residues 94–103 (GASNSEANSA) the composition is skewed to polar residues. EF-hand domains follow at residues 175 to 210 (RPQD…MLHI) and 220 to 255 (ELRP…TIPL). Ca(2+)-binding residues include D188, D190, N192, E199, D233, D235, D237, and E244. 2 consecutive Phorbol-ester/DAG-type zinc fingers follow at residues 271–321 (RHAW…IPGC) and 336–385 (QHAW…LCDG). The 135-residue stretch at 430-564 (PGTHPLLVLV…LDRWHLEVIP (135 aa)) folds into the DAGKc domain. The interval 768-791 (APMMMGPPQKSSFFSLRRKSRSKD) is disordered.

Belongs to the eukaryotic diacylglycerol kinase family. Predominantly expressed in retina and in a much lesser extent in the brain. Other tissues contain extremely low levels of DGK-gamma.

It is found in the membrane. The protein resides in the cytoplasm. Its subcellular location is the cytosol. The protein localises to the cytoskeleton. It catalyses the reaction a 1,2-diacyl-sn-glycerol + ATP = a 1,2-diacyl-sn-glycero-3-phosphate + ADP + H(+). The enzyme catalyses 1,2-didecanoyl-sn-glycerol + ATP = 1,2-didecanoyl-sn-glycero-3-phosphate + ADP + H(+). It carries out the reaction 1-octadecanoyl-2-(5Z,8Z,11Z,14Z-eicosatetraenoyl)-sn-glycerol + ATP = 1-octadecanoyl-2-(5Z,8Z,11Z,14Z-eicosatetraenoyl)-sn-glycero-3-phosphate + ADP + H(+). The catalysed reaction is 1,2-di-(9Z-octadecenoyl)-sn-glycerol + ATP = 1,2-di-(9Z-octadecenoyl)-sn-glycero-3-phosphate + ADP + H(+). It catalyses the reaction 1-octadecanoyl-2-(9Z,12Z)-octadecadienoyl-sn-glycerol + ATP = 1-octadecanoyl-2-(9Z,12Z-octadecadienoyl)-sn-glycero-3-phosphate + ADP + H(+). The protein operates within lipid metabolism; glycerolipid metabolism. Its activity is regulated as follows. The activity is calcium-dependent. Requires phosphatidylserine for maximal activity. Diacylglycerol kinase that converts diacylglycerol/DAG into phosphatidic acid/phosphatidate/PA and regulates the respective levels of these two bioactive lipids. Thereby, acts as a central switch between the signaling pathways activated by these second messengers with different cellular targets and opposite effects in numerous biological processes. Has no apparent specificity with regard to the acyl compositions of diacylglycerol. Specifically expressed in the cerebellum where it controls the level of diacylglycerol which in turn regulates the activity of protein kinase C gamma. Through protein kinase C gamma, indirectly regulates the dendritic development of Purkinje cells, cerebellar long term depression and ultimately cerebellar motor coordination. This is Diacylglycerol kinase gamma (DGKG) from Homo sapiens (Human).